The primary structure comprises 424 residues: Serine--tRNA ligase (424 aa).

Thr233–Glu235 is a binding site for L-serine. ATP-binding positions include Arg264 to Glu266 and Val280. Glu287 contacts L-serine. An ATP-binding site is contributed by Glu351 to Ser354. Ser386 is an L-serine binding site.

The protein belongs to the class-II aminoacyl-tRNA synthetase family. Type-1 seryl-tRNA synthetase subfamily. Homodimer. The tRNA molecule binds across the dimer.

The protein resides in the cytoplasm. The enzyme catalyses tRNA(Ser) + L-serine + ATP = L-seryl-tRNA(Ser) + AMP + diphosphate + H(+). The catalysed reaction is tRNA(Sec) + L-serine + ATP = L-seryl-tRNA(Sec) + AMP + diphosphate + H(+). It participates in aminoacyl-tRNA biosynthesis; selenocysteinyl-tRNA(Sec) biosynthesis; L-seryl-tRNA(Sec) from L-serine and tRNA(Sec): step 1/1. Its function is as follows. Catalyzes the attachment of serine to tRNA(Ser). Is also able to aminoacylate tRNA(Sec) with serine, to form the misacylated tRNA L-seryl-tRNA(Sec), which will be further converted into selenocysteinyl-tRNA(Sec). The polypeptide is Serine--tRNA ligase (Kosmotoga olearia (strain ATCC BAA-1733 / DSM 21960 / TBF 19.5.1)).